The chain runs to 140 residues: Small ribosomal subunit protein uS19 (140 aa).

The protein belongs to the universal ribosomal protein uS19 family.

Protein S19 forms a complex with S13 that binds strongly to the 16S ribosomal RNA. This chain is Small ribosomal subunit protein uS19 (rps19), found in Saccharolobus solfataricus (strain ATCC 35092 / DSM 1617 / JCM 11322 / P2) (Sulfolobus solfataricus).